The sequence spans 336 residues: GTPase Obg (336 aa).

Positions 1–159 constitute an Obg domain; it reads MKFLDQAKIY…RWVWLRLKLI (159 aa). The region spanning 160 to 328 is the OBG-type G domain; it reads ADIGLVGLPN…LLRLLQDRVT (169 aa). GTP is bound by residues 166–173, 191–195, 213–216, 280–283, and 309–311; these read GLPNAGKS, FTTLH, DIPG, NKCD, and SGA. Residues Ser-173 and Thr-193 each contribute to the Mg(2+) site.

It belongs to the TRAFAC class OBG-HflX-like GTPase superfamily. OBG GTPase family. In terms of assembly, monomer. Mg(2+) serves as cofactor.

It is found in the cytoplasm. Its function is as follows. An essential GTPase which binds GTP, GDP and possibly (p)ppGpp with moderate affinity, with high nucleotide exchange rates and a fairly low GTP hydrolysis rate. Plays a role in control of the cell cycle, stress response, ribosome biogenesis and in those bacteria that undergo differentiation, in morphogenesis control. The sequence is that of GTPase Obg from Gluconobacter oxydans (strain 621H) (Gluconobacter suboxydans).